Reading from the N-terminus, the 396-residue chain is 1-deoxy-D-xylulose 5-phosphate reductoisomerase (396 aa).

Residues threonine 10, glycine 11, serine 12, isoleucine 13, and asparagine 123 each coordinate NADPH. Lysine 124 contacts 1-deoxy-D-xylulose 5-phosphate. Glutamate 125 serves as a coordination point for NADPH. Aspartate 149 contributes to the Mn(2+) binding site. Positions 150, 151, 185, and 208 each coordinate 1-deoxy-D-xylulose 5-phosphate. Glutamate 151 contributes to the Mn(2+) binding site. An NADPH-binding site is contributed by glycine 214. 4 residues coordinate 1-deoxy-D-xylulose 5-phosphate: serine 221, asparagine 226, lysine 227, and glutamate 230. Glutamate 230 contacts Mn(2+).

This sequence belongs to the DXR family. It depends on Mg(2+) as a cofactor. Mn(2+) is required as a cofactor.

The enzyme catalyses 2-C-methyl-D-erythritol 4-phosphate + NADP(+) = 1-deoxy-D-xylulose 5-phosphate + NADPH + H(+). It participates in isoprenoid biosynthesis; isopentenyl diphosphate biosynthesis via DXP pathway; isopentenyl diphosphate from 1-deoxy-D-xylulose 5-phosphate: step 1/6. Its function is as follows. Catalyzes the NADPH-dependent rearrangement and reduction of 1-deoxy-D-xylulose-5-phosphate (DXP) to 2-C-methyl-D-erythritol 4-phosphate (MEP). The sequence is that of 1-deoxy-D-xylulose 5-phosphate reductoisomerase from Shewanella baltica (strain OS155 / ATCC BAA-1091).